Reading from the N-terminus, the 182-residue chain is NADH-quinone oxidoreductase subunit I (182 aa).

4Fe-4S ferredoxin-type domains are found at residues 52 to 82 (LTRD…LQKA) and 92 to 121 (DFFR…LTPD). The [4Fe-4S] cluster site is built by Cys62, Cys65, Cys68, Cys72, Cys101, Cys104, Cys107, and Cys111.

Belongs to the complex I 23 kDa subunit family. As to quaternary structure, NDH-1 is composed of 13 different subunits. Subunits NuoA, H, J, K, L, M, N constitute the membrane sector of the complex. Requires [4Fe-4S] cluster as cofactor.

The protein localises to the cell inner membrane. It carries out the reaction a quinone + NADH + 5 H(+)(in) = a quinol + NAD(+) + 4 H(+)(out). In terms of biological role, NDH-1 shuttles electrons from NADH, via FMN and iron-sulfur (Fe-S) centers, to quinones in the respiratory chain. The immediate electron acceptor for the enzyme in this species is believed to be ubiquinone. Couples the redox reaction to proton translocation (for every two electrons transferred, four hydrogen ions are translocated across the cytoplasmic membrane), and thus conserves the redox energy in a proton gradient. The polypeptide is NADH-quinone oxidoreductase subunit I (Pseudomonas fluorescens (strain Pf0-1)).